A 104-amino-acid chain; its full sequence is Acetylcholine receptor subunit alpha (104 aa).

Residues 1–104 (NPPAIFKSYC…YFIVNVIIPC (104 aa)) lie on the Extracellular side of the membrane. 2 disulfides stabilise this stretch: Cys-10-Cys-24 and Cys-74-Cys-75. Asn-23 carries an N-linked (GlcNAc...) asparagine glycan.

Belongs to the ligand-gated ion channel (TC 1.A.9) family. Acetylcholine receptor (TC 1.A.9.1) subfamily. Alpha-1/CHRNA1 sub-subfamily. One of the alpha chains that assemble within the acetylcholine receptor, a pentamer of two alpha chains, a beta, a delta, and a gamma or epsilon chains.

It localises to the postsynaptic cell membrane. The protein localises to the cell membrane. It carries out the reaction K(+)(in) = K(+)(out). The catalysed reaction is Na(+)(in) = Na(+)(out). Functionally, upon acetylcholine binding, the AChR responds by an extensive change in conformation that affects all subunits and leads to opening of an ion-conducting channel across the plasma membrane. This is Acetylcholine receptor subunit alpha (CHRNA1) from Naja naja (Indian cobra).